The following is a 257-amino-acid chain: Thiazole synthase (257 aa).

Catalysis depends on Lys-95, which acts as the Schiff-base intermediate with DXP. 1-deoxy-D-xylulose 5-phosphate-binding positions include Gly-156, 182–183 (AG), and 204–205 (NT).

This sequence belongs to the ThiG family. In terms of assembly, homotetramer. Forms heterodimers with either ThiH or ThiS.

Its subcellular location is the cytoplasm. It carries out the reaction [ThiS sulfur-carrier protein]-C-terminal-Gly-aminoethanethioate + 2-iminoacetate + 1-deoxy-D-xylulose 5-phosphate = [ThiS sulfur-carrier protein]-C-terminal Gly-Gly + 2-[(2R,5Z)-2-carboxy-4-methylthiazol-5(2H)-ylidene]ethyl phosphate + 2 H2O + H(+). The protein operates within cofactor biosynthesis; thiamine diphosphate biosynthesis. Catalyzes the rearrangement of 1-deoxy-D-xylulose 5-phosphate (DXP) to produce the thiazole phosphate moiety of thiamine. Sulfur is provided by the thiocarboxylate moiety of the carrier protein ThiS. In vitro, sulfur can be provided by H(2)S. The sequence is that of Thiazole synthase from Vibrio vulnificus (strain CMCP6).